The following is a 1051-amino-acid chain: Putative transcription factor SEF1 (1051 aa).

Residues 1-10 are compositionally biased toward basic and acidic residues; that stretch reads MSTDVSERGA. Disordered stretches follow at residues 1–54 and 67–90; these read MSTD…SEES and GQASPDRSKVSKQQNGASGHRPVT. Residues 11–21 show a composition bias toward low complexity; the sequence is EAGSSSGLLSS. The segment at residues 92 to 122 is a DNA-binding region (zn(2)-C6 fungal-type); it reads CTHCRQHKIKCNASENFPSSCSRCERMGLQC. Residues 206–218 show a composition bias toward low complexity; that stretch reads SSVKSSVNTPSGS. 3 disordered regions span residues 206 to 227, 738 to 759, and 927 to 968; these read SSVKSSVNTPSGSYSASAVDVS, EKNRKEQPVHTAATGSQDTEKR, and ASGN…QPAP.

Its subcellular location is the nucleus. Its function is as follows. Putative transcription factor. The sequence is that of Putative transcription factor SEF1 (SEF1) from Eremothecium gossypii (strain ATCC 10895 / CBS 109.51 / FGSC 9923 / NRRL Y-1056) (Yeast).